The following is a 638-amino-acid chain: Probable potassium transport system protein Kup (638 aa).

Transmembrane regions (helical) follow at residues 25–45 (LAIA…LYSL), 65–85 (VISL…LLFV), 114–134 (AGAL…DAVI), 152–172 (PHLS…LFWI), 184–204 (FGPI…YHIV), 226–246 (LLQA…AEAL), 262–282 (AYGL…ALLI), 291–311 (PFFL…STVA), 352–372 (IYVP…VVGF), 382–402 (YGIA…VVMV), 410–430 (LLVG…FGAN), and 434–454 (VAQG…LLMT).

Belongs to the HAK/KUP transporter (TC 2.A.72) family.

It is found in the cell inner membrane. It carries out the reaction K(+)(in) + H(+)(in) = K(+)(out) + H(+)(out). Transport of potassium into the cell. Likely operates as a K(+):H(+) symporter. The protein is Probable potassium transport system protein Kup of Burkholderia cenocepacia (strain HI2424).